The chain runs to 199 residues: Translation initiation factor IF-3 (199 aa).

This sequence belongs to the IF-3 family. As to quaternary structure, monomer.

The protein localises to the cytoplasm. In terms of biological role, IF-3 binds to the 30S ribosomal subunit and shifts the equilibrium between 70S ribosomes and their 50S and 30S subunits in favor of the free subunits, thus enhancing the availability of 30S subunits on which protein synthesis initiation begins. This chain is Translation initiation factor IF-3, found in Mycoplasmopsis pulmonis (strain UAB CTIP) (Mycoplasma pulmonis).